The sequence spans 425 residues: Serine--tRNA ligase (425 aa).

The segment at Asn110–Pro134 is disordered. The span at Pro117 to Pro134 shows a compositional bias: basic and acidic residues. Residue Thr233 to Glu235 participates in L-serine binding. Arg264–Glu266 is an ATP binding site. Glu287 contacts L-serine. Glu351 to Ser354 lines the ATP pocket. L-serine is bound at residue Ser385.

The protein belongs to the class-II aminoacyl-tRNA synthetase family. Type-1 seryl-tRNA synthetase subfamily. In terms of assembly, homodimer. The tRNA molecule binds across the dimer.

The protein localises to the cytoplasm. The catalysed reaction is tRNA(Ser) + L-serine + ATP = L-seryl-tRNA(Ser) + AMP + diphosphate + H(+). The enzyme catalyses tRNA(Sec) + L-serine + ATP = L-seryl-tRNA(Sec) + AMP + diphosphate + H(+). It participates in aminoacyl-tRNA biosynthesis; selenocysteinyl-tRNA(Sec) biosynthesis; L-seryl-tRNA(Sec) from L-serine and tRNA(Sec): step 1/1. Functionally, catalyzes the attachment of serine to tRNA(Ser). Is also able to aminoacylate tRNA(Sec) with serine, to form the misacylated tRNA L-seryl-tRNA(Sec), which will be further converted into selenocysteinyl-tRNA(Sec). This chain is Serine--tRNA ligase, found in Synechococcus sp. (strain RCC307).